Here is a 1573-residue protein sequence, read N- to C-terminus: Mediator of RNA polymerase II transcription subunit 1 (1573 aa).

The LXXLL motif 1 motif lies at 588 to 592; sequence LTSLL. Disordered regions lie at residues 595 to 691, 774 to 883, and 928 to 1564; these read TSNS…EDDF, SKLP…FKDF, and LGGP…GDDD. Over residues 606-617 the composition is skewed to pro residues; it reads PTPPQHTPPPAS. The short motif at 629 to 633 is the LXXLL motif 2 element; sequence LMNLL. Residues 651–668 are compositionally biased toward polar residues; the sequence is ERQNSSGSPRTELGSSAS. Over residues 678–691 the composition is skewed to basic and acidic residues; sequence TGTEKMKNQTEDDF. Polar residues-rich tracts occupy residues 791 to 804, 835 to 864, and 934 to 944; these read RDSS…STLF, GSPN…QSGF, and QETQSRSQSPL. Residues 949 to 961 are compositionally biased toward basic and acidic residues; it reads LGKDRPQKQKVKE. The segment covering 963–973 has biased composition (gly residues); that stretch reads GNGGGAGGGLS. Composition is skewed to low complexity over residues 1025–1038, 1053–1085, 1092–1116, 1124–1143, and 1155–1164; these read PTST…GTSG, KITI…SSSS, SSLS…MKIG, SGQS…SMGK, and SSNVNNSSGS. Residues 1176 to 1193 are compositionally biased toward polar residues; that stretch reads MNPSLSKPNISPSHSRPS. A compositionally biased stretch (low complexity) spans 1226–1277; sequence LSGSGSNSTTKSSSGLVSSGSLTQKPNSSSSSSSSSSSSSSSSSSSSSSFSS. Over residues 1278 to 1290 the composition is skewed to polar residues; the sequence is GVSQNLHSSSKGK. Residues 1350–1362 show a composition bias toward basic and acidic residues; sequence PTKREKGEKDKSK. 2 stretches are compositionally biased toward polar residues: residues 1420-1435 and 1443-1457; these read SQMQ…SGST and PSHN…QALD. Residues 1461 to 1471 show a composition bias toward low complexity; the sequence is ESGSSSIAEKS. A compositionally biased stretch (basic residues) spans 1496–1505; that stretch reads KHKKHKKEKK. Over residues 1506–1518 the composition is skewed to basic and acidic residues; that stretch reads RLKDKDRDREKKK.

The protein belongs to the Mediator complex subunit 1 family. As to quaternary structure, component of the Mediator complex.

It is found in the nucleus. Functionally, component of the Mediator complex, a coactivator involved in the regulated transcription of nearly all RNA polymerase II-dependent genes. Mediator functions as a bridge to convey information from gene-specific regulatory proteins to the basal RNA polymerase II transcription machinery. Mediator is recruited to promoters by direct interactions with regulatory proteins and serves as a scaffold for the assembly of a functional preinitiation complex with RNA polymerase II and the general transcription factors. This Xenopus tropicalis (Western clawed frog) protein is Mediator of RNA polymerase II transcription subunit 1 (med1).